Consider the following 254-residue polypeptide: MLTIADVEFESRLFTGTGKFSNSQVMLEAITASKSQLVTVAMKRIDFKMGLDDLLTPLRQAGVRLLPNTSGARNAKEAVFAAELAREMLGTHWIKLEIHPDPKYLMPDAIETLEAARILCEKGFIVLPYVHADPVLCRRLEEVGCAAVMPLASPIGSNQGLVTESFLKIIIEQARVPVVIDAGIGAPSQAARAMELGADAVLVNTAIASSASPIVMAECFKEAVQCGRRAFEAGLGRVQTGAVHTSPLTGFLNQ.

The active-site Schiff-base intermediate with DXP is Lys-95. 1-deoxy-D-xylulose 5-phosphate is bound by residues Gly-156, 182–183 (AG), and 204–205 (NT).

Belongs to the ThiG family. Homotetramer. Forms heterodimers with either ThiH or ThiS.

Its subcellular location is the cytoplasm. The catalysed reaction is [ThiS sulfur-carrier protein]-C-terminal-Gly-aminoethanethioate + 2-iminoacetate + 1-deoxy-D-xylulose 5-phosphate = [ThiS sulfur-carrier protein]-C-terminal Gly-Gly + 2-[(2R,5Z)-2-carboxy-4-methylthiazol-5(2H)-ylidene]ethyl phosphate + 2 H2O + H(+). Its pathway is cofactor biosynthesis; thiamine diphosphate biosynthesis. Functionally, catalyzes the rearrangement of 1-deoxy-D-xylulose 5-phosphate (DXP) to produce the thiazole phosphate moiety of thiamine. Sulfur is provided by the thiocarboxylate moiety of the carrier protein ThiS. In vitro, sulfur can be provided by H(2)S. In Shewanella baltica (strain OS223), this protein is Thiazole synthase.